The primary structure comprises 455 residues: Beta-glucosidase A (455 aa).

The active-site Proton donor is Glu-165. Glu-363 (nucleophile) is an active-site residue.

The protein belongs to the glycosyl hydrolase 1 family.

The catalysed reaction is Hydrolysis of terminal, non-reducing beta-D-glucosyl residues with release of beta-D-glucose.. The sequence is that of Beta-glucosidase A (bglA) from Caldicellulosiruptor saccharolyticus (Caldocellum saccharolyticum).